The primary structure comprises 897 residues: Interleukin enhancer-binding factor 3 (897 aa).

Residues Arg-5–Gly-378 enclose the DZF domain. The segment at Gln-52–Met-85 is disordered. A compositionally biased stretch (acidic residues) spans Ser-60–Ser-73. Position 67 is a phosphothreonine (Thr-67). The segment covering Lys-74 to Met-85 has biased composition (basic and acidic residues). At Lys-100 the chain carries N6-acetyllysine. Position 188 is a phosphothreonine; by PKR (Thr-188). Phosphoserine is present on Ser-190. A Glycyl lysine isopeptide (Lys-Gly) (interchain with G-Cter in ubiquitin) cross-link involves residue Lys-297. Thr-315 is modified (phosphothreonine; by PKR). Lys-348 is covalently cross-linked (Glycyl lysine isopeptide (Lys-Gly) (interchain with G-Cter in SUMO1)). The segment at Thr-363–Gln-401 is disordered. The Bipartite nuclear localization signal signature appears at Lys-371–Lys-389. Positions Arg-372–Pro-383 are enriched in basic and acidic residues. Phosphoserine occurs at positions 382 and 384. Lys-396 is covalently cross-linked (Glycyl lysine isopeptide (Lys-Gly) (interchain with G-Cter in SUMO2)). Residues Glu-398–Leu-467 form the DRBM 1 domain. Lys-460 carries the N6-acetyllysine modification. Disordered stretches follow at residues Gly-466–His-524, Gly-624–His-662, and Gly-720–Arg-897. A compositionally biased stretch (basic and acidic residues) spans Glu-472–Asp-481. Phosphoserine occurs at positions 476, 477, 482, and 486. A Glycyl lysine isopeptide (Lys-Gly) (interchain with G-Cter in SUMO2) cross-link involves residue Lys-489. The span at Val-499–Val-508 shows a compositional bias: low complexity. The 67-residue stretch at His-524–Pro-590 folds into the DRBM 2 domain. Residues Arg-609 to Arg-897 are interaction with PRMT1. The segment covering Arg-644 to His-662 has biased composition (gly residues). Composition is skewed to low complexity over residues Ser-745 to Gly-769, Gly-783 to Ser-794, and Asp-802 to Ser-812. Phosphoserine occurs at positions 794, 812, 814, and 818. The segment covering Gly-813–Ser-822 has biased composition (gly residues). A compositionally biased stretch (low complexity) spans Tyr-823–Gly-833. Residues Ser-834–Gly-844 are compositionally biased toward gly residues. A compositionally biased stretch (low complexity) spans Ser-845 to Ser-885.

In terms of assembly, identified in a IGF2BP1-dependent mRNP granule complex containing untranslated mRNAs. Interacts with FUS and SMN. Interacts (via C-terminus) with PRMT1. Forms a complex with ILF2. Can also bind to PRKDC/XRCC7: this may stabilize the interaction of PRKDC/XRCC7 and the heterodimeric complex of XRCC6/KU70 and XRCC5/KU80. Forms a heteromeric complex with ZNF346 and ILF3. Found in a nuclear export complex with XPO5, ILF3, Ran and double-stranded RNA or double-stranded minihelix VA1 RNA. Found in a nuclear export complex with XPO5, RAN, ILF3, ZNF346 and double-stranded RNA. Interacts with XPO5 and ZNF346. Forms a complex with ILF2, YLPM1, KHDRBS1, RBMX, NCOA5 and PPP1CA. Interacts with AGO1 and AGO2. Interacts with DHX36; this interaction occurs in a RNA-dependent manner. Interacts with ELAVL1; this interaction occurs in a RNA-dependent manner. Interacts with HAVCR2; this interaction promotes ILF3 ubiquitination and subsequent degradation. In terms of processing, phosphorylated at Thr-188 and Thr-315 by PKR in response to RNA viruses. This phosphorylation results in the dissociation of ILF2 from the ILF2-ILF3 complex resulting in a cytoplasmic sequestration of ILF3 where it can bind to viral RNAs and impede viral replication. Methylated by protein arginine N-methyltransferase 1.

It is found in the nucleus. It localises to the nucleolus. Its subcellular location is the cytoplasm. RNA-binding protein that plays an essential role in the biogenesis of circular RNAs (circRNAs) which are produced by back-splicing circularization of pre-mRNAs. Within the nucleus, promotes circRNAs processing by stabilizing the regulatory elements residing in the flanking introns of the circularized exons. Plays thereby a role in the back-splicing of a subset of circRNAs. As a consequence, participates in a wide range of transcriptional and post-transcriptional processes. Binds to poly-U elements and AU-rich elements (AREs) in the 3'-UTR of target mRNAs. Upon viral infection, ILF3 accumulates in the cytoplasm and participates in the innate antiviral response. Mechanistically, ILF3 becomes phosphorylated and activated by the double-stranded RNA-activated protein kinase/PKR which releases ILF3 from cellular mature circRNAs. In turn, unbound ILF3 molecules are able to interact with and thus inhibit viral mRNAs. The sequence is that of Interleukin enhancer-binding factor 3 (Ilf3) from Rattus norvegicus (Rat).